A 354-amino-acid chain; its full sequence is Probable L-ascorbate-6-phosphate lactonase UlaG (354 aa).

Belongs to the UlaG family. Requires a divalent metal cation as cofactor.

Its subcellular location is the cytoplasm. It catalyses the reaction L-ascorbate 6-phosphate + H2O = 3-dehydro-L-gulonate 6-phosphate. It functions in the pathway cofactor degradation; L-ascorbate degradation; D-xylulose 5-phosphate from L-ascorbate: step 1/4. Its function is as follows. Probably catalyzes the hydrolysis of L-ascorbate-6-P into 3-keto-L-gulonate-6-P. Is essential for L-ascorbate utilization under anaerobic conditions. The protein is Probable L-ascorbate-6-phosphate lactonase UlaG of Shigella flexneri.